Reading from the N-terminus, the 1402-residue chain is MNHEVMNLFNPQSPAQTFDSIRISIASPEKILSWSYGEIKKPETINYRTFKPERDGLFCARIFGPIKDYECLCGKYKRMKYKGIICEKCGVEVTLSRVRRERMGHIELAAPVAHIWFLKSLPGRISTLLDLTLKDIERVLYFENYIVTEPGLTSLKLHQLLSEEEYMLAIDEFGEDQFTAMIGAEAIYELLASMELEKIANDLRAELSETTSELKQKKLIKRLKIVENFLESGNRPEWMIMKTIPVIPPDLRPLVPLDGGRFATSDLNDLYRRVINRNNRLKRLIELRAPGIIVRNEKRMVQEAVDALFDNGRRGRVITGANKRPLKSLSDMLKGKQGRFRQNLLGKRVDYSGRSVIVTGPELKLHQCGLPKKMALELFKPFIYARLDAKGYSSTVKQAKKLVEKEHPEVWDILDEVIREHPVLLNRAPTLHRLGIQAFEPVLIEGKAIQLHPLVCTAFNADFDGDQMAVHVPLSLEAQLEARVLMMSTNNILHPANGAPIIVPSQDMVLGLYYLSIVSEKEPGEGMVFSDIGELHHALENKVVTLHTKIKGRVKNIDKDGKEVAKLYDTTPGRLIIGELLPKNPSISFDIVNQEMTKKNISKMIDQVYRHCGQKETVIFCDRIMQLGFSHACRAGISFGKDDMLIPDSKLRLVAETEALAKEYEQQYNDGLITQGEKYNKVVDAWGKCTDRVADEMMKRIQAVEFDPKTGRQRPMNSIYMMSHSGARGSANQMKQLAGMRGLMAKPSGEIIETPIISNFKEGLTVNEYFNSTHGARKGLADTALKTANSGYLTRRLVDVAQDAIISAVDCGTAKGLTMQPIVDAGQIVASLGQRILGRTALVDILHPVSGEVILEGGAMIEEADVAKIEEAGIQSVQIRSALTCETRLGVCAKCYGRDLARGTPVNQGEAVGVIAAQSIGEPGTQLTMRTFHLGGTAQVVDSSHLEASYEGTVEIRNRNVVRNSEGHLVVMGRNMAILIKDGSGKERVVHRISYGAHIFVDDGDVVKCGQRIAEWDPYTRPILTEVEGYVGFEDMIDGLSVTETADESTGITKRLVIDWRANPRGADLKPAIIIHADKKGEAIAKYKGAEARYMMSVETILSVEPGSHVKAGDVIARLPMESAKTKDITGGLPRVAELFEARRPKDHAIIAEVSGTIRFGRGYKNKRRIIIEPNDETLEPVEYLIPKGKLFHFQEGDQIEKGDYILDGNPAPHDILAIKGVEALASYLVNEIQEVYRLQGVLINDKHIEVIVRQMLQKVEITESGDSGYIPGDHVDRIELDEINDNLLAEGKRPASGNPILLGITKASLQTPSFISAASFQETTRVLTEAAVSGKIDTLQGLKENVIVGRLIPAGTGGTIAQIRRIAAVRDDLIVDEQRKSGNNEVAKAMLTNMTTVTTVE.

Residues cysteine 71, cysteine 73, cysteine 86, and cysteine 89 each contribute to the Zn(2+) site. The Mg(2+) site is built by aspartate 462, aspartate 464, and aspartate 466. Zn(2+) contacts are provided by cysteine 811, cysteine 885, cysteine 892, and cysteine 895.

It belongs to the RNA polymerase beta' chain family. The RNAP catalytic core consists of 2 alpha, 1 beta, 1 beta' and 1 omega subunit. When a sigma factor is associated with the core the holoenzyme is formed, which can initiate transcription. Mg(2+) serves as cofactor. It depends on Zn(2+) as a cofactor.

It carries out the reaction RNA(n) + a ribonucleoside 5'-triphosphate = RNA(n+1) + diphosphate. DNA-dependent RNA polymerase catalyzes the transcription of DNA into RNA using the four ribonucleoside triphosphates as substrates. This Bartonella henselae (strain ATCC 49882 / DSM 28221 / CCUG 30454 / Houston 1) (Rochalimaea henselae) protein is DNA-directed RNA polymerase subunit beta'.